Consider the following 227-residue polypeptide: Peroxiredoxin-like 2A (227 aa).

The interval 13-111 is thioredoxin fold; it reads LWSISIGAFG…DQLGVPLYAV (99 aa). Catalysis depends on redox-active residues cysteine 84 and cysteine 87.

This sequence belongs to the peroxiredoxin-like PRXL2 family. PRXL2A subfamily.

It is found in the cytoplasm. In terms of biological role, involved in redox regulation of the cell. Acts as an antioxidant. The chain is Peroxiredoxin-like 2A (prxl2a) from Xenopus tropicalis (Western clawed frog).